Consider the following 170-residue polypeptide: Arginine repressor (170 aa).

This sequence belongs to the ArgR family.

Its subcellular location is the cytoplasm. It functions in the pathway amino-acid biosynthesis; L-arginine biosynthesis [regulation]. Regulates arginine biosynthesis genes. In Mycobacterium tuberculosis (strain ATCC 25177 / H37Ra), this protein is Arginine repressor.